We begin with the raw amino-acid sequence, 387 residues long: Sorting nexin-7 (387 aa).

The PX domain maps to 30 to 151 (KDLFITVDEP…IFLTAQAWEL (122 aa)). Residues Arg-73, Gln-75, Lys-103, and Arg-117 each contribute to the a 1,2-diacyl-sn-glycero-3-phospho-(1D-myo-inositol-3-phosphate) site. A BAR domain is found at 178–387 (GVKNRPEEFM…HLEEASEDKP (210 aa)).

It belongs to the sorting nexin family. Heterodimer; heterodimerizes with SNX4.

The protein localises to the early endosome membrane. Involved in the regulation of endocytosis and in several stages of intracellular trafficking. Together with SNX4, involved in autophagosome assembly by regulating trafficking and recycling of phospholipid scramblase ATG9A. The polypeptide is Sorting nexin-7 (Homo sapiens (Human)).